The primary structure comprises 514 residues: Cardiolipin synthase 2 (514 aa).

3 consecutive transmembrane segments (helical) span residues 7 to 27 (LIFF…FIDV), 41 to 61 (ILGI…CVIF), and 71 to 91 (LTWL…YLLF). 2 consecutive PLD phosphodiesterase domains span residues 249–276 (INYR…GDEY) and 427–454 (EKGF…DMRS). Residues H254, K256, D261, H432, K434, and D439 contribute to the active site.

It belongs to the phospholipase D family. Cardiolipin synthase subfamily.

The protein resides in the cell membrane. The enzyme catalyses 2 a 1,2-diacyl-sn-glycero-3-phospho-(1'-sn-glycerol) = a cardiolipin + glycerol. Functionally, catalyzes the reversible phosphatidyl group transfer from one phosphatidylglycerol molecule to another to form cardiolipin (CL) (diphosphatidylglycerol) and glycerol. This Bacillus cereus (strain ATCC 14579 / DSM 31 / CCUG 7414 / JCM 2152 / NBRC 15305 / NCIMB 9373 / NCTC 2599 / NRRL B-3711) protein is Cardiolipin synthase 2 (cls2).